A 778-amino-acid polypeptide reads, in one-letter code: Endonuclease MutS2 (778 aa).

ATP is bound at residue 328 to 335; the sequence is GPNTGGKT. The Smr domain occupies 702–777; the sequence is LDLRGKRYEE…GSGATIVTFK (76 aa).

This sequence belongs to the DNA mismatch repair MutS family. MutS2 subfamily. As to quaternary structure, homodimer. Binds to stalled ribosomes, contacting rRNA.

Endonuclease that is involved in the suppression of homologous recombination and thus may have a key role in the control of bacterial genetic diversity. Its function is as follows. Acts as a ribosome collision sensor, splitting the ribosome into its 2 subunits. Detects stalled/collided 70S ribosomes which it binds and splits by an ATP-hydrolysis driven conformational change. Acts upstream of the ribosome quality control system (RQC), a ribosome-associated complex that mediates the extraction of incompletely synthesized nascent chains from stalled ribosomes and their subsequent degradation. Probably generates substrates for RQC. The polypeptide is Endonuclease MutS2 (Streptococcus pneumoniae (strain JJA)).